We begin with the raw amino-acid sequence, 743 residues long: F-box protein COS111 (743 aa).

One can recognise an F-box domain in the interval 145–191 (ELHIKNLPVEILDYIFYLVDDNLDYKSCMYTCKLFYFLAKPYYYENL). 2 disordered regions span residues 224 to 257 (IKPG…DPQY) and 311 to 330 (FSNV…SSST). A compositionally biased stretch (acidic residues) spans 229–248 (DEDEQEEGQEENAENGEEEN).

Its function is as follows. F-box protein probably involved in ubiquitin conjugation pathway. The protein is F-box protein COS111 (COS111) of Candida albicans (strain SC5314 / ATCC MYA-2876) (Yeast).